We begin with the raw amino-acid sequence, 485 residues long: Telomeric DNA-binding factor trf1 (485 aa).

Over residues 1–20 the composition is skewed to basic and acidic residues; sequence MSKRSLDPSDDFKGQKRLAI. The tract at residues 1-23 is disordered; that stretch reads MSKRSLDPSDDFKGQKRLAIDPE. Positions 400–457 constitute an HTH myb-type domain; it reads RRVANRRSWTKEEEEALLDGLDLVKGPRWSQILELYGPGGKKSEVLKYRNQVQLKDKA. Residues 428 to 453 constitute a DNA-binding region (H-T-H motif); it reads WSQILELYGPGGKKSEVLKYRNQVQL.

As to quaternary structure, homodimer.

The protein localises to the nucleus. Its function is as follows. Binds the telomeric double-stranded TTACAGG repeat and regulates telomere length. This Schizosaccharomyces pombe (strain 972 / ATCC 24843) (Fission yeast) protein is Telomeric DNA-binding factor trf1 (trf1).